Consider the following 152-residue polypeptide: Nucleoside diphosphate kinase A (152 aa).

ATP-binding residues include lysine 12, phenylalanine 60, arginine 88, and threonine 94. Lysine 100 is covalently cross-linked (Glycyl lysine isopeptide (Lys-Gly) (interchain with G-Cter in ubiquitin)). Positions 105 and 115 each coordinate ATP. The Pros-phosphohistidine intermediate role is filled by histidine 118. Serine 120, serine 122, and serine 125 each carry phosphoserine.

The protein belongs to the NDK family. As to quaternary structure, hexamer of two different chains: An and B (A6, A5B, A4B2, A3B3, A2B4, AB5, B6). Interacts with PRUNE1. Component of the SET complex, composed of at least ANP32A, APEX1, HMGB2, NME1, SET and TREX1. Within this complex, interacts directly with SET. Also interacts with TREX1, but only following translocation to the nucleus. It depends on Mg(2+) as a cofactor.

It localises to the cytoplasm. It is found in the nucleus. The catalysed reaction is a 2'-deoxyribonucleoside 5'-diphosphate + ATP = a 2'-deoxyribonucleoside 5'-triphosphate + ADP. It carries out the reaction a ribonucleoside 5'-diphosphate + ATP = a ribonucleoside 5'-triphosphate + ADP. With respect to regulation, autophosphorylation at His-118 increases serine/threonine protein kinase activity of the enzyme. Interaction with the SET complex inhibits exonuclease activity. Major role in the synthesis of nucleoside triphosphates other than ATP. The ATP gamma phosphate is transferred to the NDP beta phosphate via a ping-pong mechanism, using a phosphorylated active-site intermediate. Possesses nucleoside-diphosphate kinase, serine/threonine-specific protein kinase, geranyl and farnesyl pyrophosphate kinase, histidine protein kinase and 3'-5' exonuclease activities. Involved in cell proliferation, differentiation and development, signal transduction, G protein-coupled receptor endocytosis, and gene expression. Required for neural development including neural patterning and cell fate determination. During GZMA-mediated cell death, works in concert with TREX1. NME1 nicks one strand of DNA and TREX1 removes bases from the free 3' end to enhance DNA damage and prevent DNA end reannealing and rapid repair. This chain is Nucleoside diphosphate kinase A (NME1), found in Canis lupus familiaris (Dog).